We begin with the raw amino-acid sequence, 312 residues long: Ribosomal RNA small subunit methyltransferase H (312 aa).

Residues 36 to 38 (GGH), Asp55, Phe81, Asp103, and Gln110 each bind S-adenosyl-L-methionine.

The protein belongs to the methyltransferase superfamily. RsmH family.

The protein localises to the cytoplasm. The catalysed reaction is cytidine(1402) in 16S rRNA + S-adenosyl-L-methionine = N(4)-methylcytidine(1402) in 16S rRNA + S-adenosyl-L-homocysteine + H(+). Specifically methylates the N4 position of cytidine in position 1402 (C1402) of 16S rRNA. This Marinomonas sp. (strain MWYL1) protein is Ribosomal RNA small subunit methyltransferase H.